A 174-amino-acid polypeptide reads, in one-letter code: MNYFELFKFSPAFDIDTALLAERYRELQRAVHPDKFANDTEQQKLLSVQRTAQVNDGFQTLKDPIRRAEHMLSLRGIELSHETTTVKDTGFLMQQMEWREALEDIRDSDDPQASIDELYQSFAQYRAQLTQQLTQLLTSEQAEDALLAADQVRKLKFMAKLHDELTRVEDALLD.

Positions 2–74 (NYFELFKFSP…IRRAEHMLSL (73 aa)) constitute a J domain.

Belongs to the HscB family. As to quaternary structure, interacts with HscA and stimulates its ATPase activity.

Functionally, co-chaperone involved in the maturation of iron-sulfur cluster-containing proteins. Seems to help targeting proteins to be folded toward HscA. This is Co-chaperone protein HscB homolog from Shewanella baltica (strain OS223).